Reading from the N-terminus, the 138-residue chain is Large ribosomal subunit protein uL16 (138 aa).

Residues 1–13 show a composition bias toward basic residues; it reads MLQPSRRKYRKEQ. The tract at residues 1-24 is disordered; the sequence is MLQPSRRKYRKEQKGRNTGLASRG.

It belongs to the universal ribosomal protein uL16 family. As to quaternary structure, part of the 50S ribosomal subunit.

Its function is as follows. Binds 23S rRNA and is also seen to make contacts with the A and possibly P site tRNAs. The protein is Large ribosomal subunit protein uL16 of Bordetella bronchiseptica (strain ATCC BAA-588 / NCTC 13252 / RB50) (Alcaligenes bronchisepticus).